Reading from the N-terminus, the 689-residue chain is Translation initiation factor IF-2 (689 aa).

Residues 41–109 (DYERVFGGGN…EAPAAEEREA (69 aa)) are disordered. A compositionally biased stretch (basic residues) spans 61–70 (RKGRQKKRRR). Over residues 80–94 (RGPRAAAPSRPSRGR) the composition is skewed to low complexity. Positions 96 to 109 (AAREEAPAAEEREA) are enriched in basic and acidic residues. Positions 192–361 (EKPPVITVMG…LVVAELEELR (170 aa)) constitute a tr-type G domain. The tract at residues 201–208 (GHVDHGKT) is G1. 201–208 (GHVDHGKT) is a binding site for GTP. The tract at residues 226-230 (GITQH) is G2. Residues 247-250 (DTPG) are G3. Residues 247-251 (DTPGH) and 301-304 (NKID) contribute to the GTP site. A G4 region spans residues 301–304 (NKID). Positions 337–339 (SAK) are G5.

It belongs to the TRAFAC class translation factor GTPase superfamily. Classic translation factor GTPase family. IF-2 subfamily.

The protein resides in the cytoplasm. Its function is as follows. One of the essential components for the initiation of protein synthesis. Protects formylmethionyl-tRNA from spontaneous hydrolysis and promotes its binding to the 30S ribosomal subunits. Also involved in the hydrolysis of GTP during the formation of the 70S ribosomal complex. The chain is Translation initiation factor IF-2 from Rubrobacter xylanophilus (strain DSM 9941 / JCM 11954 / NBRC 16129 / PRD-1).